The following is a 159-amino-acid chain: NADH-quinone oxidoreductase subunit I (159 aa).

4Fe-4S ferredoxin-type domains follow at residues 51-80 (RRYE…IEAD) and 90-119 (TRYD…EGPN). C60, C63, C66, C70, C99, C102, C105, and C109 together coordinate [4Fe-4S] cluster.

Belongs to the complex I 23 kDa subunit family. As to quaternary structure, NDH-1 is composed of 14 different subunits. Subunits NuoA, H, J, K, L, M, N constitute the membrane sector of the complex. The cofactor is [4Fe-4S] cluster.

The protein localises to the cell inner membrane. The enzyme catalyses a quinone + NADH + 5 H(+)(in) = a quinol + NAD(+) + 4 H(+)(out). Its function is as follows. NDH-1 shuttles electrons from NADH, via FMN and iron-sulfur (Fe-S) centers, to quinones in the respiratory chain. The immediate electron acceptor for the enzyme in this species is believed to be ubiquinone. Couples the redox reaction to proton translocation (for every two electrons transferred, four hydrogen ions are translocated across the cytoplasmic membrane), and thus conserves the redox energy in a proton gradient. The polypeptide is NADH-quinone oxidoreductase subunit I (Rickettsia bellii (strain OSU 85-389)).